Consider the following 202-residue polypeptide: MGNIMEGKSVEELSSTECHQWYKKFMTECPSGQLTLYEFRQFFGLKNLSPSASQYVEQMFETFDFNKDGYIDFMEYVAALSLVLKGKVEQKLRWYFKLYDVDGNGCIDRDELLTIIRAIRTINPWSDSSMSAEEFTDTVFAKIDINGDGELSLEEFMEGVQKDQMLLDTLTRSLDLTGIVRRLQNGEHEEAGTGDLAAEAAG.

G2 carries the N-myristoyl glycine lipid modification. At N3 the chain carries Deamidated asparagine. 4 consecutive EF-hand domains span residues 31–49 (SGQL…KNLS), 51–86 (SASQ…VLKG), 87–122 (KVEQ…IRTI), and 131–166 (SAEE…DQML). 15 residues coordinate Ca(2+): D64, N66, D68, Y70, E75, D100, D102, N104, C106, E111, D144, N146, D148, E150, and E155.

In terms of assembly, homodimer. As to expression, in the retina, expressed in rod photoreceptors (at protein level). Expressed in cone photoreceptors.

It localises to the membrane. It is found in the photoreceptor inner segment. The protein resides in the cell projection. The protein localises to the cilium. Its subcellular location is the photoreceptor outer segment. In terms of biological role, stimulates retinal guanylyl cyclase when free calcium ions concentration is low and inhibits guanylyl cyclase when free calcium ions concentration is elevated. This Ca(2+)-sensitive regulation of retinal guanylyl cyclase is a key event in recovery of the dark state of rod photoreceptors following light exposure. May be involved in cone photoreceptor light response and recovery of response in bright light. The polypeptide is Guanylyl cyclase-activating protein 1 (Guca1a) (Mus musculus (Mouse)).